We begin with the raw amino-acid sequence, 523 residues long: 2-isopropylmalate synthase (523 aa).

The 263-residue stretch at 5 to 267 (VIIFDTTLRD…HTNINHHEIW (263 aa)) folds into the Pyruvate carboxyltransferase domain. 4 residues coordinate Mn(2+): aspartate 14, histidine 202, histidine 204, and asparagine 238. Positions 392-523 (RLDYFSVQSG…HNKENNKEIV (132 aa)) are regulatory domain.

The protein belongs to the alpha-IPM synthase/homocitrate synthase family. LeuA type 1 subfamily. As to quaternary structure, homodimer. Mn(2+) serves as cofactor.

The protein resides in the cytoplasm. The catalysed reaction is 3-methyl-2-oxobutanoate + acetyl-CoA + H2O = (2S)-2-isopropylmalate + CoA + H(+). The protein operates within amino-acid biosynthesis; L-leucine biosynthesis; L-leucine from 3-methyl-2-oxobutanoate: step 1/4. Its function is as follows. Catalyzes the condensation of the acetyl group of acetyl-CoA with 3-methyl-2-oxobutanoate (2-ketoisovalerate) to form 3-carboxy-3-hydroxy-4-methylpentanoate (2-isopropylmalate). The chain is 2-isopropylmalate synthase from Salmonella arizonae (strain ATCC BAA-731 / CDC346-86 / RSK2980).